A 280-amino-acid chain; its full sequence is Late embryogenesis abundant protein 76 (280 aa).

Disordered stretches follow at residues Met-1 to Val-156 and Glu-220 to Thr-241. Basic and acidic residues predominate over residues Met-28–Thr-39. 5 LEA 11-mer repeat repeats span residues Lys-31–Gln-41, Thr-53–Gln-63, Thr-75–Gln-85, Thr-97–Gln-107, and Thr-119–Gln-129. Over residues Ser-40–Gln-114 the composition is skewed to low complexity. 2 stretches are compositionally biased toward basic and acidic residues: residues Lys-115–Thr-127 and Glu-136–Thr-145. Residues Thr-230–Asp-239 show a composition bias toward low complexity.

Belongs to the LEA type 4 family.

Lea proteins are late embryonic proteins abundant in higher plant seed embryos. The chain is Late embryogenesis abundant protein 76 from Brassica napus (Rape).